The chain runs to 130 residues: Insulin-like growth factor 1 (130 aa).

A signal peptide spans 1–25 (MHAVSSSHLFYLAFCLLVLTSSATA). The tract at residues 26-54 (GPETLCGAELVDALQFVCGDRGFYFNKPT) is b. Disulfide bonds link Cys-31–Cys-73, Cys-43–Cys-86, and Cys-72–Cys-77. The tract at residues 55-66 (GYGSSSRRAPQT) is c. The interval 67 to 87 (GIVDECCFRSCDLRRLEMYCA) is a. Residues 88–95 (PLKPAKSA) are d. Positions 96-130 (RSVRAQRHTDMPKTQKEVHLKNASRGSAGNKNYRM) are cleaved as a propeptide — e peptide. A disordered region spans residues 97-130 (SVRAQRHTDMPKTQKEVHLKNASRGSAGNKNYRM). Basic and acidic residues predominate over residues 102–115 (RHTDMPKTQKEVHL). Positions 119–130 (SRGSAGNKNYRM) are enriched in polar residues.

The protein belongs to the insulin family. As to quaternary structure, forms a ternary complex with IGFR1 and ITGAV:ITGB3. Forms a ternary complex with IGFR1 and ITGA6:ITGB4. Forms a ternary complex with IGFBP3 and ALS.

Its subcellular location is the secreted. Its function is as follows. The insulin-like growth factors, isolated from plasma, are structurally and functionally related to insulin but have a much higher growth-promoting activity. May be a physiological regulator of [1-14C]-2-deoxy-D-glucose (2DG) transport and glycogen synthesis in osteoblasts. Stimulates glucose transport in bone-derived osteoblastic (PyMS) cells and is effective at much lower concentrations than insulin, not only regarding glycogen and DNA synthesis but also with regard to enhancing glucose uptake. May play a role in synapse maturation. Ca(2+)-dependent exocytosis of IGF1 is required for sensory perception of smell in the olfactory bulb. Acts as a ligand for IGF1R. Binds to the alpha subunit of IGF1R, leading to the activation of the intrinsic tyrosine kinase activity which autophosphorylates tyrosine residues in the beta subunit thus initiating a cascade of down-stream signaling events leading to activation of the PI3K-AKT/PKB and the Ras-MAPK pathways. Binds to integrins ITGAV:ITGB3 and ITGA6:ITGB4. Its binding to integrins and subsequent ternary complex formation with integrins and IGFR1 are essential for IGF1 signaling. Induces the phosphorylation and activation of IGFR1, MAPK3/ERK1, MAPK1/ERK2 and AKT1. As part of the MAPK/ERK signaling pathway, acts as a negative regulator of apoptosis in cardiomyocytes via promotion of STUB1/CHIP-mediated ubiquitination and degradation of ICER-type isoforms of CREM. The chain is Insulin-like growth factor 1 from Cavia porcellus (Guinea pig).